The chain runs to 181 residues: Large ribosomal subunit protein uL5 (181 aa).

It belongs to the universal ribosomal protein uL5 family. As to quaternary structure, part of the 50S ribosomal subunit; part of the 5S rRNA/L5/L18/L25 subcomplex. Contacts the 5S rRNA and the P site tRNA. Forms a bridge to the 30S subunit in the 70S ribosome.

In terms of biological role, this is one of the proteins that bind and probably mediate the attachment of the 5S RNA into the large ribosomal subunit, where it forms part of the central protuberance. In the 70S ribosome it contacts protein S13 of the 30S subunit (bridge B1b), connecting the 2 subunits; this bridge is implicated in subunit movement. Contacts the P site tRNA; the 5S rRNA and some of its associated proteins might help stabilize positioning of ribosome-bound tRNAs. In Mesomycoplasma hyopneumoniae (strain 232) (Mycoplasma hyopneumoniae), this protein is Large ribosomal subunit protein uL5.